The sequence spans 325 residues: DNA-directed RNA polymerase subunit alpha (325 aa).

An alpha N-terminal domain (alpha-NTD) region spans residues 1 to 238 (MSLKSLLKGF…EHLTVFINFE (238 aa)). Residues 255–325 (LKASLSKHVE…LGLSFGMRDF (71 aa)) form an alpha C-terminal domain (alpha-CTD) region.

It belongs to the RNA polymerase alpha chain family. As to quaternary structure, homodimer. The RNAP catalytic core consists of 2 alpha, 1 beta, 1 beta' and 1 omega subunit. When a sigma factor is associated with the core the holoenzyme is formed, which can initiate transcription.

It carries out the reaction RNA(n) + a ribonucleoside 5'-triphosphate = RNA(n+1) + diphosphate. Its function is as follows. DNA-dependent RNA polymerase catalyzes the transcription of DNA into RNA using the four ribonucleoside triphosphates as substrates. In Leptospira interrogans serogroup Icterohaemorrhagiae serovar copenhageni (strain Fiocruz L1-130), this protein is DNA-directed RNA polymerase subunit alpha.